The primary structure comprises 78 residues: Acyl carrier protein (78 aa).

The 76-residue stretch at serine 2–lysine 77 folds into the Carrier domain. Serine 37 is modified (O-(pantetheine 4'-phosphoryl)serine).

The protein belongs to the acyl carrier protein (ACP) family. 4'-phosphopantetheine is transferred from CoA to a specific serine of apo-ACP by AcpS. This modification is essential for activity because fatty acids are bound in thioester linkage to the sulfhydryl of the prosthetic group.

It localises to the cytoplasm. Its pathway is lipid metabolism; fatty acid biosynthesis. Functionally, carrier of the growing fatty acid chain in fatty acid biosynthesis. The sequence is that of Acyl carrier protein from Sphingopyxis alaskensis (strain DSM 13593 / LMG 18877 / RB2256) (Sphingomonas alaskensis).